The following is a 431-amino-acid chain: 3-isopropylmalate dehydratase large subunit (431 aa).

Positions 300, 360, and 363 each coordinate [4Fe-4S] cluster.

It belongs to the aconitase/IPM isomerase family. LeuC type 2 subfamily. Heterodimer of LeuC and LeuD. [4Fe-4S] cluster serves as cofactor.

The enzyme catalyses (2R,3S)-3-isopropylmalate = (2S)-2-isopropylmalate. It participates in amino-acid biosynthesis; L-leucine biosynthesis; L-leucine from 3-methyl-2-oxobutanoate: step 2/4. Its function is as follows. Catalyzes the isomerization between 2-isopropylmalate and 3-isopropylmalate, via the formation of 2-isopropylmaleate. In Sulfurihydrogenibium sp. (strain YO3AOP1), this protein is 3-isopropylmalate dehydratase large subunit.